Reading from the N-terminus, the 476-residue chain is Chromosomal replication initiator protein DnaA (476 aa).

Residues 1-87 (MSESSHVGLW…LMYNVLVDKS (87 aa)) are domain I, interacts with DnaA modulators. The segment at 87–130 (SSGATVNQESTTRSTAIPQSGLPRVDERKAPGLLRAPAVQDLDP) is domain II. Residues 131-348 (HLNPNYNFET…GIVISIMAHS (218 aa)) are domain III, AAA+ region. Residues glycine 176, glycine 178, lysine 179, and threonine 180 each coordinate ATP. The segment at 349–476 (TIYNKEIDLD…KKRNVSNGER (128 aa)) is domain IV, binds dsDNA.

The protein belongs to the DnaA family. As to quaternary structure, oligomerizes as a right-handed, spiral filament on DNA at oriC.

The protein resides in the cytoplasm. Plays an essential role in the initiation and regulation of chromosomal replication. ATP-DnaA binds to the origin of replication (oriC) to initiate formation of the DNA replication initiation complex once per cell cycle. Binds the DnaA box (a 9 base pair repeat at the origin) and separates the double-stranded (ds)DNA. Forms a right-handed helical filament on oriC DNA; dsDNA binds to the exterior of the filament while single-stranded (ss)DNA is stabiized in the filament's interior. The ATP-DnaA-oriC complex binds and stabilizes one strand of the AT-rich DNA unwinding element (DUE), permitting loading of DNA polymerase. After initiation quickly degrades to an ADP-DnaA complex that is not apt for DNA replication. Binds acidic phospholipids. This is Chromosomal replication initiator protein DnaA from Bacteroides fragilis (strain YCH46).